A 698-amino-acid polypeptide reads, in one-letter code: SHC SH2 domain-binding protein 1 homolog B (698 aa).

PbH1 repeat units follow at residues 480–502 (CAEL…EIYP), 503–524 (GSKC…LIKD), and 532–554 (IPKI…VLVK).

It is found in the midbody. The protein localises to the cytoplasm. It localises to the cytoskeleton. The protein resides in the spindle. Its function is as follows. May play a role in signaling pathways governing cellular proliferation. The chain is SHC SH2 domain-binding protein 1 homolog B (shcbp1-b) from Xenopus laevis (African clawed frog).